The primary structure comprises 379 residues: MQSLPSRRSETNKKIISEKISETITLNKLPMSRYLHFFLFTVTDVDDIWNFSETKESSLTWPKIDAKQLNEYVNTELTVYQRPFSLLGIPQNGLFKSCEKIYDEFFAEHMDNEKKYLTFPRNRSSRFGFENVPRVNELPILINHFEKSRMDVILNTNKIVLVNRELIWVPCEQVRIFNLNVSLNIPDGLFGILTGTVNDTLCECVTELITTENVISISLINLSSESVMLLPGDIELVINILPCYIPEPWETYNFPSPNFIKFSLITNKDFYVESNNYTIQNFDYMFDCPDELKALIIANKEILCHGLVVETNIWLKNTTPSVKIFNPTSQRIFVQAGICIATIIFTCGHFILKLLPNRVLNQLAVLDKTSMLWFQYSTE.

The protein belongs to the dUTPase family. Mg(2+) serves as cofactor.

The catalysed reaction is dUTP + H2O = dUMP + diphosphate + H(+). Involved in nucleotide metabolism: produces dUMP, the immediate precursor of thymidine nucleotides and decreases the intracellular concentration of dUTP to avoid uracil incorporation into viral DNA. This Human herpesvirus 7 (strain JI) (HHV-7) protein is Deoxyuridine 5'-triphosphate nucleotidohydrolase.